Reading from the N-terminus, the 150-residue chain is UPF0756 membrane protein APL_0366 (150 aa).

4 consecutive transmembrane segments (helical) span residues 12–34 (LVVLIFLGVVGNNNSITIAATVL), 52–72 (HGLSIGIIILTIGVLSPIVSG), 82–102 (FLNWKMLLAVVAGIAVAWLGG), and 123–143 (IIGVALLGGVPVGPLIAAGIL).

It belongs to the UPF0756 family.

It localises to the cell membrane. This Actinobacillus pleuropneumoniae serotype 5b (strain L20) protein is UPF0756 membrane protein APL_0366.